Reading from the N-terminus, the 451-residue chain is Protein FAM117A (451 aa).

Gly residues predominate over residues 1 to 25 (MSGAAAGGRGGGSWGPGRGGAGGLR). 2 disordered regions span residues 1 to 83 (MSGA…RPQP) and 164 to 183 (RTKL…VQGD). Ser29 and Ser67 each carry phosphoserine. A coiled-coil region spans residues 149 to 175 (TDHRKEITKLKQQLQRTKLSRSGKEKE). 2 positions are modified to phosphoserine: Ser193 and Ser213. The interval 242-293 (DGHRAPAPPQNSSCDHSLLLEPGNLTSSPSVPLASPQPPSQASREEHQGATE) is disordered. Phosphoserine occurs at positions 318 and 326. Phosphothreonine is present on Thr353. Residues 403–451 (SPGSPLPTASPRAPRKGPEASKASSLPSEPWQRSPPSEESVLFQSSLVV) are disordered. Phosphoserine is present on residues Ser412 and Ser426. The span at 436 to 451 (SPPSEESVLFQSSLVV) shows a compositional bias: polar residues.

This sequence belongs to the FAM117 family.

The protein is Protein FAM117A (Fam117a) of Mus musculus (Mouse).